Here is a 631-residue protein sequence, read N- to C-terminus: Phosphomethylpyrimidine synthase (631 aa).

Substrate contacts are provided by residues N239, M268, Y297, H333, 353–355, 394–397, and E433; these read SRG and DGLR. H437 contacts Zn(2+). Y460 contributes to the substrate binding site. H501 contributes to the Zn(2+) binding site. Residues C581, C584, and C589 each coordinate [4Fe-4S] cluster.

The protein belongs to the ThiC family. In terms of assembly, homodimer. Requires [4Fe-4S] cluster as cofactor.

The catalysed reaction is 5-amino-1-(5-phospho-beta-D-ribosyl)imidazole + S-adenosyl-L-methionine = 4-amino-2-methyl-5-(phosphooxymethyl)pyrimidine + CO + 5'-deoxyadenosine + formate + L-methionine + 3 H(+). The protein operates within cofactor biosynthesis; thiamine diphosphate biosynthesis. Its function is as follows. Catalyzes the synthesis of the hydroxymethylpyrimidine phosphate (HMP-P) moiety of thiamine from aminoimidazole ribotide (AIR) in a radical S-adenosyl-L-methionine (SAM)-dependent reaction. This Salmonella schwarzengrund (strain CVM19633) protein is Phosphomethylpyrimidine synthase.